A 546-amino-acid polypeptide reads, in one-letter code: MGSGCSSPSISLTTIATSHFQSQESLSNSLNFYSPTRFLEPHLLKSSKIFIPKSPLKCAKVPEMQTQLEDSAKPIVDPHDIDSKLVQKLANDALVWCPLRGLLVGDRNSERSGTIPGVDMVHAPVALIPMSFPESHWKQACEVAPIFNELVDRVSQDGEFLQQSLSRTRKADPFTSRLLEIHSKMLEINKLEEIRLGLHRSDYMLDEQTKLLLQIELNTISSSFPGLSCLVSELHRSLLQQYREDIASDPNRIPANNAVNQFAEALAKAWNEYGDPRAVIIFVVQAEERNMYDQHWLSASLRERHQVTTIRKTLAEIDALGELQQDGTLVVDGQAVAVIYFRAGYAPSDYHSESEWKARLLMEQSRAVKCPSISYHLAGSKKIQQELAKPNVLERFLENKDDIAKLRKCFAGLWSLDESDIVKDAIERPELYVMKPQREGGGNNIYGEDVRGALLKLQKEGTGSDAAYILMQRIFPKISHSILMREGISHKEETISELGIYGTYLRNKTEVLINQQAGYLMRTKVSSSDEGGVAAGFAVLDSIYLV.

A chloroplast-targeting transit peptide spans 1-63 (MGSGCSSPSI…SPLKCAKVPE (63 aa)). Arginine 200 contributes to the substrate binding site. ATP is bound at residue glutamate 216. Mg(2+) is bound by residues glutamate 216 and asparagine 218. Substrate-binding positions include 220–223 (ISSS), 288–290 (ERN), glutamine 294, and 342–345 (RAGY). Residues lysine 381, 435-444 (KPQREGGGNN), tyrosine 446, 471-474 (MQRI), and glutamate 497 each bind ATP. Mg(2+) is bound at residue glutamate 439. Arginine 522 is a substrate binding site. Residues lysine 524 and glutamate 530 each contribute to the ATP site. 533 to 534 (VA) lines the substrate pocket.

It belongs to the eukaryotic GSH synthase family. As to quaternary structure, homodimer. Requires Mg(2+) as cofactor.

The protein resides in the plastid. Its subcellular location is the chloroplast. The enzyme catalyses gamma-L-glutamyl-L-cysteine + glycine + ATP = glutathione + ADP + phosphate + H(+). It participates in sulfur metabolism; glutathione biosynthesis; glutathione from L-cysteine and L-glutamate: step 2/2. The sequence is that of Glutathione synthetase, chloroplastic (GSH2) from Solanum lycopersicum (Tomato).